Here is a 160-residue protein sequence, read N- to C-terminus: uncharacterized protein (160 aa).

A helical transmembrane segment spans residues 137 to 157 (YNILFVVVILLLLFVAWRCYV).

It localises to the host membrane. The protein resides in the virion. This is an uncharacterized protein from Acanthamoeba polyphaga mimivirus (APMV).